A 337-amino-acid polypeptide reads, in one-letter code: F-box protein At2g27310 (337 aa).

Positions 10-58 (DSISTLHSDIIQTQILTRLDGPTLASTATTSSYLQTLCTEEKLWQELSI) constitute an F-box domain.

The protein is F-box protein At2g27310 of Arabidopsis thaliana (Mouse-ear cress).